The chain runs to 64 residues: Small ribosomal subunit protein eS17 (64 aa).

It belongs to the eukaryotic ribosomal protein eS17 family.

This is Small ribosomal subunit protein eS17 from Natronomonas pharaonis (strain ATCC 35678 / DSM 2160 / CIP 103997 / JCM 8858 / NBRC 14720 / NCIMB 2260 / Gabara) (Halobacterium pharaonis).